A 302-amino-acid chain; its full sequence is GrpE protein homolog 1, mitochondrial (302 aa).

The transit peptide at 1–39 (MLVSRVLSRVSRSAGLRSSFSSVVTPKRNQIPIVASRFH) directs the protein to the mitochondrion. Residues 77–97 (SAEPKGNESNTEVPKTGETSE) are disordered.

It belongs to the GrpE family. As to quaternary structure, probable component of the PAM complex, at least composed of SSC1 (mtHsp70), MGE1, TIM44, PAM16/TIM16, PAM17 and PAM18/TIM14. Interacts with SSQ1.

It is found in the mitochondrion matrix. Essential component of the PAM complex, a complex required for the translocation of transit peptide-containing proteins from the inner membrane into the mitochondrial matrix in an ATP-dependent manner. Seems to control the nucleotide-dependent binding of mitochondrial HSP70 to substrate proteins. Binds ATP. Interacts with copper ions Cu(2+). This is GrpE protein homolog 1, mitochondrial from Arabidopsis thaliana (Mouse-ear cress).